Consider the following 294-residue polypeptide: 4-hydroxy-tetrahydrodipicolinate synthase (294 aa).

Position 45 (Thr-45) interacts with pyruvate. Tyr-133 serves as the catalytic Proton donor/acceptor. Lys-161 acts as the Schiff-base intermediate with substrate in catalysis. Ile-203 is a binding site for pyruvate.

Belongs to the DapA family. In terms of assembly, homotetramer; dimer of dimers.

Its subcellular location is the cytoplasm. It catalyses the reaction L-aspartate 4-semialdehyde + pyruvate = (2S,4S)-4-hydroxy-2,3,4,5-tetrahydrodipicolinate + H2O + H(+). Its pathway is amino-acid biosynthesis; L-lysine biosynthesis via DAP pathway; (S)-tetrahydrodipicolinate from L-aspartate: step 3/4. Its function is as follows. Catalyzes the condensation of (S)-aspartate-beta-semialdehyde [(S)-ASA] and pyruvate to 4-hydroxy-tetrahydrodipicolinate (HTPA). This chain is 4-hydroxy-tetrahydrodipicolinate synthase, found in Shewanella sp. (strain MR-7).